The primary structure comprises 338 residues: Phospho-2-dehydro-3-deoxyheptonate aldolase (338 aa).

It belongs to the class-I DAHP synthase family. In terms of assembly, homotetramer. A divalent metal cation serves as cofactor.

The catalysed reaction is D-erythrose 4-phosphate + phosphoenolpyruvate + H2O = 7-phospho-2-dehydro-3-deoxy-D-arabino-heptonate + phosphate. It functions in the pathway metabolic intermediate biosynthesis; chorismate biosynthesis; chorismate from D-erythrose 4-phosphate and phosphoenolpyruvate: step 1/7. Its activity is regulated as follows. Inhibited by L-phenylalanine and L-tyrosine. Its function is as follows. Catalyzes the condensation of phosphoenolpyruvate (PEP) and D-erythrose-4-phosphate (E4P) giving rise to 3-deoxy-D-arabino-heptulosonate-7-phosphate (DAHP). The protein is Phospho-2-dehydro-3-deoxyheptonate aldolase (aroF) of Thermotoga maritima (strain ATCC 43589 / DSM 3109 / JCM 10099 / NBRC 100826 / MSB8).